We begin with the raw amino-acid sequence, 37 residues long: MKVRPSVKPICEKCKVIKRKGKVMVICENPKHKQKQG.

This sequence belongs to the bacterial ribosomal protein bL36 family.

This is Large ribosomal subunit protein bL36 from Clostridioides difficile (strain 630) (Peptoclostridium difficile).